We begin with the raw amino-acid sequence, 398 residues long: Dual-specificity RNA methyltransferase RlmN (398 aa).

E119 serves as the catalytic Proton acceptor. One can recognise a Radical SAM core domain in the interval 125–364 (EADRATLCVS…TIVRKTRGDD (240 aa)). The cysteines at positions 132 and 369 are disulfide-linked. Residues C139, C143, and C146 each coordinate [4Fe-4S] cluster. Residues 193–194 (GE), S225, 247–249 (SLH), and N326 contribute to the S-adenosyl-L-methionine site. C369 serves as the catalytic S-methylcysteine intermediate.

This sequence belongs to the radical SAM superfamily. RlmN family. It depends on [4Fe-4S] cluster as a cofactor.

It is found in the cytoplasm. It carries out the reaction adenosine(2503) in 23S rRNA + 2 reduced [2Fe-2S]-[ferredoxin] + 2 S-adenosyl-L-methionine = 2-methyladenosine(2503) in 23S rRNA + 5'-deoxyadenosine + L-methionine + 2 oxidized [2Fe-2S]-[ferredoxin] + S-adenosyl-L-homocysteine. The enzyme catalyses adenosine(37) in tRNA + 2 reduced [2Fe-2S]-[ferredoxin] + 2 S-adenosyl-L-methionine = 2-methyladenosine(37) in tRNA + 5'-deoxyadenosine + L-methionine + 2 oxidized [2Fe-2S]-[ferredoxin] + S-adenosyl-L-homocysteine. Functionally, specifically methylates position 2 of adenine 2503 in 23S rRNA and position 2 of adenine 37 in tRNAs. m2A2503 modification seems to play a crucial role in the proofreading step occurring at the peptidyl transferase center and thus would serve to optimize ribosomal fidelity. The polypeptide is Dual-specificity RNA methyltransferase RlmN (Yersinia pseudotuberculosis serotype O:3 (strain YPIII)).